The following is a 460-amino-acid chain: MKKIKTYENKNILILGLGKSGFSVAKLLLKLGAKLTLNDKKDLSNDDRAAELGKLGVRVISGYHPVEIFDEEKFDYLVKNPGIPYENPMVEKAEKLDIPVITEPEIALNVSEAPYVCVTGSNGKTTTVMLTQRIMDHNLSKNGGHAYAVGNIGVPISEVVEKATSKDLLVVEMSSFQLLGVTDIKPKVAAIVDIYNNVHLDYHKTFDNYVEAKLRITQSQDQDDYFIANFDQKNILEKELDKTKAKVQTFSETDKTADYFIGDEYLESKDDHHIMKISDIKIPGIHNQQNCLVAIAISKLMGADDSDIQYALSTFTGATHRLQYVMTYNDRKIYNDSKSTNIEAATVAIPSFKEPEVLIAGGLDRGFMFDSLVPLFKKHVKSIVLYGETKYLLADAARKAGIKDIVIVNTLQEAVPRAYELSEAGDVILFSPACASWDQFNTFEERGDFFVKFIKELKTK.

120 to 126 (GSNGKTT) provides a ligand contact to ATP.

This sequence belongs to the MurCDEF family.

It localises to the cytoplasm. It carries out the reaction UDP-N-acetyl-alpha-D-muramoyl-L-alanine + D-glutamate + ATP = UDP-N-acetyl-alpha-D-muramoyl-L-alanyl-D-glutamate + ADP + phosphate + H(+). It functions in the pathway cell wall biogenesis; peptidoglycan biosynthesis. In terms of biological role, cell wall formation. Catalyzes the addition of glutamate to the nucleotide precursor UDP-N-acetylmuramoyl-L-alanine (UMA). This Lactobacillus johnsonii (strain CNCM I-12250 / La1 / NCC 533) protein is UDP-N-acetylmuramoylalanine--D-glutamate ligase.